Reading from the N-terminus, the 860-residue chain is MENQKENLFSEPHKRGLMKSPLHPSSKANMVLAEIQPDLGPLTTPTKPKEVSQGEPWTPTANLKMLISAVSPEIRSRDQKRGLSDNRSALPEARDCLHEHLSGDEFEKSQPSRKEKSLGLLCHKFLARYPKYPNPAVNNDICLDEVAEELNVERRRIYDIVNVLESLHMVSRLAKNRYTWHGRHNLTKTLGTLKSVGEENKYAEQIMMIKRKEYEQEFDFIKSCGIEDHVIKSHTGQNGHSDMCFVELPGVEFRAASVNSRKDKSLRVMSQKFVMLFLVSTPQIVSLEIAAKILIGEDHVEDLDKSKYKTKIRRLYDIANVLSSLDLIKKVHVTEERGRKPAFKWTGPEISPNNSGSSPIMPLPASLEAEQSAKENCAKNLFSTRGKPSFTRHPSLIKLVKSIENDRRKISSAPSSPVKSNKAESSQNSPPVPNKMAQLAAICKMQLEEQSSEPRKKVKVNLARSGHYKPLAPLDPTVNTELELLTPSLIQPLGVVPLIPSPLSSAVPVILPQAPSGPSYAIYLQPAQAQMLTPPPGLSPTVCPTQPSNATGSKDPTDAPAEKTATDAATTGSLQPAPERHGAKHRSKETTGDRGTKRMITAEDSGPSSVKKPKEDLKALENVPTPTPLFPSGYLIPLTQCSSLGPDSVLSNTENSGTPSPNHRIYGSPIAGVIPVASSELTAVNFPPFHVTPLKLMVSPTSMAAVPVGNSPALNSGHPAPAQNPSSAIVNFTLQHLGLISPGVQMSASPGPGAGTVPVSPRVEADNLSSRQRRATNHDSPVLGQSQLNGQPVAGTGAQQPVPVTPKGSQLVAENFFRTPGGPTKPTSSPYTDFDGANKTSFGTLFVPQRKLEVSTEDIH.

Disordered regions lie at residues 1-27 and 38-57; these read MENQ…PSSK and DLGP…GEPW. Phosphoserine occurs at positions 71 and 102. 2 DNA-binding regions span residues 113–182 and 261–347; these read RKEK…TWHG and RKDK…KWTG. Disordered stretches follow at residues 407-433, 532-616, and 745-803; these read RRKI…PPVP, LTPP…PKED, and QMSA…QPVP. Residues S412 and S416 each carry the phosphoserine modification. Composition is skewed to polar residues over residues 412 to 429 and 542 to 554; these read SAPS…SQNS and VCPT…TGSK. Basic and acidic residues predominate over residues 555–565; it reads DPTDAPAEKTA.

This sequence belongs to the E2F/DP family. As to quaternary structure, interacts with HIF1A. Homodimer and heterodimer: mainly forms homodimers and, to a lesser extent, heterodimers with E2F8. Dimerization is important for DNA-binding. As to expression, highly expressed in liver, skin, thymus and testis. Expressed in trophoblast giant cells throughout placenta development (at protein level).

Its subcellular location is the nucleus. Its function is as follows. Atypical E2F transcription factor that participates in various processes such as angiogenesis and polyploidization of specialized cells. Mainly acts as a transcription repressor that binds DNA independently of DP proteins and specifically recognizes the E2 recognition site 5'-TTTC[CG]CGC-3'. Directly represses transcription of classical E2F transcription factors such as E2F1: component of a feedback loop in S phase by repressing the expression of E2F1, thereby preventing p53/TP53-dependent apoptosis. Plays a key role in polyploidization of cells in placenta and liver by regulating the endocycle, probably by repressing genes promoting cytokinesis and antagonizing action of classical E2F proteins (E2F1, E2F2 and/or E2F3). Required for placental development by promoting polyploidization of trophoblast giant cells. Acts as a promoter of sprouting angiogenesis, possibly by acting as a transcription activator: associates with HIF1A, recognizes and binds the VEGFA promoter, which is different from canonical E2 recognition site, and activates expression of the VEGFA gene. This is Transcription factor E2F8 (E2f8) from Mus musculus (Mouse).